Reading from the N-terminus, the 178-residue chain is ATP-dependent protease subunit HslV (178 aa).

Thr7 is a catalytic residue. The Na(+) site is built by Gly162, Cys165, and Thr168.

The protein belongs to the peptidase T1B family. HslV subfamily. As to quaternary structure, a double ring-shaped homohexamer of HslV is capped on each side by a ring-shaped HslU homohexamer. The assembly of the HslU/HslV complex is dependent on binding of ATP.

It is found in the cytoplasm. It catalyses the reaction ATP-dependent cleavage of peptide bonds with broad specificity.. With respect to regulation, allosterically activated by HslU binding. Protease subunit of a proteasome-like degradation complex believed to be a general protein degrading machinery. The sequence is that of ATP-dependent protease subunit HslV from Cupriavidus pinatubonensis (strain JMP 134 / LMG 1197) (Cupriavidus necator (strain JMP 134)).